We begin with the raw amino-acid sequence, 29 residues long: Pyridoxal 5'-phosphate synthase subunit PdxS (29 aa).

It belongs to the PdxS/SNZ family. In terms of assembly, in the presence of PdxT, forms a dodecamer of heterodimers.

It carries out the reaction aldehydo-D-ribose 5-phosphate + D-glyceraldehyde 3-phosphate + L-glutamine = pyridoxal 5'-phosphate + L-glutamate + phosphate + 3 H2O + H(+). It functions in the pathway cofactor biosynthesis; pyridoxal 5'-phosphate biosynthesis. In terms of biological role, catalyzes the formation of pyridoxal 5'-phosphate from ribose 5-phosphate (RBP), glyceraldehyde 3-phosphate (G3P) and ammonia. The ammonia is provided by the PdxT subunit. Can also use ribulose 5-phosphate and dihydroxyacetone phosphate as substrates, resulting from enzyme-catalyzed isomerization of RBP and G3P, respectively. The protein is Pyridoxal 5'-phosphate synthase subunit PdxS of Clostridium pasteurianum.